We begin with the raw amino-acid sequence, 489 residues long: DNA-directed RNA polymerase subunit beta' C-terminal section (489 aa).

3 residues coordinate Mg(2+): D208, D210, and D212.

Belongs to the RNA polymerase beta' chain family. RpoC1 subfamily. In terms of assembly, in plastids the minimal PEP RNA polymerase catalytic core is composed of four subunits: alpha, beta, beta', and beta''. When a (nuclear-encoded) sigma factor is associated with the core the holoenzyme is formed, which can initiate transcription. The cofactor is Mg(2+).

Its subcellular location is the plastid. The protein localises to the chloroplast. The enzyme catalyses RNA(n) + a ribonucleoside 5'-triphosphate = RNA(n+1) + diphosphate. Its function is as follows. DNA-dependent RNA polymerase catalyzes the transcription of DNA into RNA using the four ribonucleoside triphosphates as substrates. This chain is DNA-directed RNA polymerase subunit beta' C-terminal section (rpoC1B), found in Chlamydomonas reinhardtii (Chlamydomonas smithii).